The following is a 492-amino-acid chain: Ketol-acid reductoisomerase (NADP(+)) (492 aa).

A KARI N-terminal Rossmann domain is found at 15–208 (AQLGQCRFMD…GGDRAGVLQS (194 aa)). Residues 45–48 (CGAQ), Arg-68, Arg-76, Ser-78, and 108–110 (DKQ) each bind NADP(+). His-132 is a catalytic residue. Gly-158 lines the NADP(+) pocket. KARI C-terminal knotted domains lie at 209–353 (SFIA…DEQT) and 354–486 (YFDK…MTDM). Asp-217, Glu-221, Glu-389, and Glu-393 together coordinate Mg(2+). Residue Ser-414 coordinates substrate.

It belongs to the ketol-acid reductoisomerase family. It depends on Mg(2+) as a cofactor.

It catalyses the reaction (2R)-2,3-dihydroxy-3-methylbutanoate + NADP(+) = (2S)-2-acetolactate + NADPH + H(+). The catalysed reaction is (2R,3R)-2,3-dihydroxy-3-methylpentanoate + NADP(+) = (S)-2-ethyl-2-hydroxy-3-oxobutanoate + NADPH + H(+). It functions in the pathway amino-acid biosynthesis; L-isoleucine biosynthesis; L-isoleucine from 2-oxobutanoate: step 2/4. The protein operates within amino-acid biosynthesis; L-valine biosynthesis; L-valine from pyruvate: step 2/4. Its function is as follows. Involved in the biosynthesis of branched-chain amino acids (BCAA). Catalyzes an alkyl-migration followed by a ketol-acid reduction of (S)-2-acetolactate (S2AL) to yield (R)-2,3-dihydroxy-isovalerate. In the isomerase reaction, S2AL is rearranged via a Mg-dependent methyl migration to produce 3-hydroxy-3-methyl-2-ketobutyrate (HMKB). In the reductase reaction, this 2-ketoacid undergoes a metal-dependent reduction by NADPH to yield (R)-2,3-dihydroxy-isovalerate. The chain is Ketol-acid reductoisomerase (NADP(+)) from Shewanella oneidensis (strain ATCC 700550 / JCM 31522 / CIP 106686 / LMG 19005 / NCIMB 14063 / MR-1).